Reading from the N-terminus, the 312-residue chain is uncharacterized protein (312 aa).

This is an uncharacterized protein from Escherichia coli (strain K12).